The sequence spans 172 residues: Inorganic pyrophosphatase (172 aa).

Residues K28, R42, and Y54 each contribute to the substrate site. Mg(2+)-binding residues include D64, D69, and D101. Residue Y140 coordinates substrate.

Belongs to the PPase family. Homohexamer. Requires Mg(2+) as cofactor.

The protein resides in the cytoplasm. It catalyses the reaction diphosphate + H2O = 2 phosphate + H(+). Functionally, catalyzes the hydrolysis of inorganic pyrophosphate (PPi) forming two phosphate ions. In Campylobacter jejuni subsp. jejuni serotype O:2 (strain ATCC 700819 / NCTC 11168), this protein is Inorganic pyrophosphatase.